We begin with the raw amino-acid sequence, 675 residues long: PTS system glucose-specific EIICBA component (675 aa).

Residues 3-414 form the PTS EIIC type-1 domain; that stretch reads KKFFGQLQRI…FNFKTPGRED (412 aa). The next 11 membrane-spanning stretches (helical) occupy residues 16–36, 63–83, 89–109, 126–146, 170–190, 199–219, 273–293, 303–323, 329–349, 355–375, and 383–403; these read LMLP…GNAF, AGGI…AIGL, VAAI…GMFL, VLGI…GALA, FVPI…AIIW, AFSE…FGFI, FMQG…LAIY, VVAG…ITEP, LFVA…SFLI, LHLG…GILP, and VIPV…FLIV. The PTS EIIB type-1 domain occupies 425–506; the sequence is SELPFKVLDA…QQIMDGKITS (82 aa). The Phosphocysteine intermediate; for EIIB activity role is filled by C447. Residues 547–651 form the PTS EIIA type-1 domain; the sequence is DKVFSEKMMG…STITPIVVTN (105 aa). H599 acts as the Tele-phosphohistidine intermediate; for EIIA activity in catalysis.

The protein localises to the cell membrane. It catalyses the reaction N(pros)-phospho-L-histidyl-[protein] + D-glucose(out) = D-glucose 6-phosphate(in) + L-histidyl-[protein]. Inhibited by 2-deoxyglucose and methyl beta-D-glucoside, but not by methyl alpha-D-glucoside, p-nitrophenyl alpha-D-glucoside, o-nitrophenyl beta-D-glucoside and salicin. The phosphoenolpyruvate-dependent sugar phosphotransferase system (sugar PTS), a major carbohydrate active transport system, catalyzes the phosphorylation of incoming sugar substrates concomitantly with their translocation across the cell membrane. This system is involved in glucose transport. Cannot transport galactose, fructose, mannose, cellobiose, sucrose, maltose, lactose, melibiose and trehalose, as well as N-acetylglucosamine. The chain is PTS system glucose-specific EIICBA component (ptsG) from Staphylococcus carnosus (strain TM300).